The primary structure comprises 563 residues: Membrane protein insertase YidC (563 aa).

A helical membrane pass occupies residues 1 to 21 (MDIKRTILIVALAIVTYVGVL). Positions 43 to 62 (APGIPDTAAGTNGSASADVP) are disordered. Helical transmembrane passes span 344–364 (LELTVDYGFLWFIAQPIFWLL), 370–390 (ILGNWGWSIIVLTMLIKGLFF), 440–460 (LGGCLPILVQMPVFLSLYWVL), 471–491 (WILWITDLSIKDPFFILPIIM), and 518–538 (PIIFTFFFLWFPAGLVLYWVV).

The protein belongs to the OXA1/ALB3/YidC family. Type 1 subfamily. Interacts with the Sec translocase complex via SecD. Specifically interacts with transmembrane segments of nascent integral membrane proteins during membrane integration.

The protein localises to the cell inner membrane. Its function is as follows. Required for the insertion and/or proper folding and/or complex formation of integral membrane proteins into the membrane. Involved in integration of membrane proteins that insert both dependently and independently of the Sec translocase complex, as well as at least some lipoproteins. Aids folding of multispanning membrane proteins. This is Membrane protein insertase YidC from Pseudomonas savastanoi pv. phaseolicola (strain 1448A / Race 6) (Pseudomonas syringae pv. phaseolicola (strain 1448A / Race 6)).